The sequence spans 443 residues: Xaa-Pro dipeptidase (443 aa).

Residues Asp-246, Asp-257, His-339, Glu-384, and Glu-423 each contribute to the Mn(2+) site.

This sequence belongs to the peptidase M24B family. Bacterial-type prolidase subfamily. Requires Mn(2+) as cofactor.

The catalysed reaction is Xaa-L-Pro dipeptide + H2O = an L-alpha-amino acid + L-proline. Functionally, splits dipeptides with a prolyl residue in the C-terminal position. The protein is Xaa-Pro dipeptidase of Citrobacter koseri (strain ATCC BAA-895 / CDC 4225-83 / SGSC4696).